We begin with the raw amino-acid sequence, 335 residues long: Dihydroorotate dehydrogenase (quinone) (335 aa).

Residues 59-63 and threonine 83 each bind FMN; that span reads AGLDK. Lysine 63 is a substrate binding site. 108-112 is a binding site for substrate; that stretch reads NRMGF. FMN is bound by residues asparagine 136 and asparagine 169. Asparagine 169 is a binding site for substrate. The active-site Nucleophile is the serine 172. Asparagine 174 contacts substrate. FMN contacts are provided by lysine 214 and threonine 242. Residue 243 to 244 coordinates substrate; the sequence is NT. Residues glycine 265, glycine 294, and 315–316 each bind FMN; that span reads YS.

The protein belongs to the dihydroorotate dehydrogenase family. Type 2 subfamily. Monomer. FMN is required as a cofactor.

Its subcellular location is the cell membrane. It catalyses the reaction (S)-dihydroorotate + a quinone = orotate + a quinol. It functions in the pathway pyrimidine metabolism; UMP biosynthesis via de novo pathway; orotate from (S)-dihydroorotate (quinone route): step 1/1. Functionally, catalyzes the conversion of dihydroorotate to orotate with quinone as electron acceptor. In Neisseria meningitidis serogroup C / serotype 2a (strain ATCC 700532 / DSM 15464 / FAM18), this protein is Dihydroorotate dehydrogenase (quinone).